A 292-amino-acid polypeptide reads, in one-letter code: Homoserine kinase (292 aa).

ATP is bound at residue 84–94 (PFSRGLGSSSA).

This sequence belongs to the GHMP kinase family. Homoserine kinase subfamily.

It is found in the cytoplasm. The catalysed reaction is L-homoserine + ATP = O-phospho-L-homoserine + ADP + H(+). The protein operates within amino-acid biosynthesis; L-threonine biosynthesis; L-threonine from L-aspartate: step 4/5. Its function is as follows. Catalyzes the ATP-dependent phosphorylation of L-homoserine to L-homoserine phosphate. This is Homoserine kinase from Campylobacter hominis (strain ATCC BAA-381 / DSM 21671 / CCUG 45161 / LMG 19568 / NCTC 13146 / CH001A).